A 266-amino-acid chain; its full sequence is Diphthine synthase (266 aa).

S-adenosyl-L-methionine is bound by residues leucine 9, aspartate 85, isoleucine 88, 113-114 (TA), leucine 168, alanine 210, and histidine 235.

Belongs to the diphthine synthase family. Homodimer.

It carries out the reaction 2-[(3S)-amino-3-carboxypropyl]-L-histidyl-[translation elongation factor 2] + 3 S-adenosyl-L-methionine = diphthine-[translation elongation factor 2] + 3 S-adenosyl-L-homocysteine + 3 H(+). Its pathway is protein modification; peptidyl-diphthamide biosynthesis. In terms of biological role, S-adenosyl-L-methionine-dependent methyltransferase that catalyzes the trimethylation of the amino group of the modified target histidine residue in translation elongation factor 2 (EF-2), to form an intermediate called diphthine. The three successive methylation reactions represent the second step of diphthamide biosynthesis. This is Diphthine synthase from Natronomonas pharaonis (strain ATCC 35678 / DSM 2160 / CIP 103997 / JCM 8858 / NBRC 14720 / NCIMB 2260 / Gabara) (Halobacterium pharaonis).